A 713-amino-acid chain; its full sequence is Calpain-1 catalytic subunit (713 aa).

One can recognise a Calpain catalytic domain in the interval 55 to 354; sequence LFQDEAFPPV…FTKLEICNLT (300 aa). Residues Q109 and D114 each contribute to the Ca(2+) site. Residues C115, H272, and N296 contribute to the active site. Ca(2+) contacts are provided by D318 and E323. T354 carries the post-translational modification Phosphothreonine. The domain III stretch occupies residues 355-525; that stretch reads PDALKSRTLR…KKAGTQELDD (171 aa). The interval 526–541 is linker; the sequence is QIQANLPDEKVLSEEE. EF-hand domains follow at residues 540-575, 584-617, 614-649, and 679-713; these read EEID…IISK, FSLE…NRIR, NRIR…AGFK, and VRLE…TMFA. The interval 542–712 is domain IV; it reads IDDNFKTLFS…LFKWLQLTMF (171 aa). The Ca(2+) site is built by D597, D599, N601, K603, E608, D627, D629, S631, S633, and E638.

The protein belongs to the peptidase C2 family. As to quaternary structure, forms a heterodimer with a small (regulatory) subunit CAPNS1. The cofactor is Ca(2+). Post-translationally, undergoes calcium-induced successive autoproteolytic cleavages that generate a membrane-bound 78 kDa active form and an intracellular 75 kDa active form. Calpastatin reduces with high efficiency the transition from 78 kDa to 75 kDa calpain forms.

It localises to the cytoplasm. Its subcellular location is the cell membrane. It catalyses the reaction Broad endopeptidase specificity.. With respect to regulation, activated by micromolar concentrations of calcium and inhibited by calpastatin. Calcium-regulated non-lysosomal thiol-protease which catalyzes limited proteolysis of substrates involved in cytoskeletal remodeling and signal transduction. Proteolytically cleaves CTBP1 at 'Asn-375', 'Gly-388' and 'His-410'. Cleaves and activates caspase-7 (CASP7). The sequence is that of Calpain-1 catalytic subunit from Mus musculus (Mouse).